Here is a 282-residue protein sequence, read N- to C-terminus: Biotin synthase (282 aa).

Residues 1-228 (MQEIFLCSIS…NARLMAAGGR (228 aa)) form the Radical SAM core domain. The [4Fe-4S] cluster site is built by Cys17, Cys21, and Cys24. The [2Fe-2S] cluster site is built by Cys61, Cys96, Cys154, and Arg221.

The protein belongs to the radical SAM superfamily. Biotin synthase family. As to quaternary structure, homodimer. The cofactor is [4Fe-4S] cluster. It depends on [2Fe-2S] cluster as a cofactor.

It carries out the reaction (4R,5S)-dethiobiotin + (sulfur carrier)-SH + 2 reduced [2Fe-2S]-[ferredoxin] + 2 S-adenosyl-L-methionine = (sulfur carrier)-H + biotin + 2 5'-deoxyadenosine + 2 L-methionine + 2 oxidized [2Fe-2S]-[ferredoxin]. It participates in cofactor biosynthesis; biotin biosynthesis; biotin from 7,8-diaminononanoate: step 2/2. Catalyzes the conversion of dethiobiotin (DTB) to biotin by the insertion of a sulfur atom into dethiobiotin via a radical-based mechanism. This is Biotin synthase from Helicobacter acinonychis (strain Sheeba).